Reading from the N-terminus, the 528-residue chain is Glucose-6-phosphate isomerase (528 aa).

Glu322 serves as the catalytic Proton donor. Residues His351 and Lys455 contribute to the active site.

The protein belongs to the GPI family.

It is found in the cytoplasm. The enzyme catalyses alpha-D-glucose 6-phosphate = beta-D-fructose 6-phosphate. It participates in carbohydrate biosynthesis; gluconeogenesis. The protein operates within carbohydrate degradation; glycolysis; D-glyceraldehyde 3-phosphate and glycerone phosphate from D-glucose: step 2/4. Catalyzes the reversible isomerization of glucose-6-phosphate to fructose-6-phosphate. The protein is Glucose-6-phosphate isomerase of Synechococcus elongatus (strain ATCC 33912 / PCC 7942 / FACHB-805) (Anacystis nidulans R2).